Consider the following 341-residue polypeptide: S-adenosylmethionine:tRNA ribosyltransferase-isomerase (341 aa).

This sequence belongs to the QueA family. In terms of assembly, monomer.

The protein resides in the cytoplasm. The enzyme catalyses 7-aminomethyl-7-carbaguanosine(34) in tRNA + S-adenosyl-L-methionine = epoxyqueuosine(34) in tRNA + adenine + L-methionine + 2 H(+). It participates in tRNA modification; tRNA-queuosine biosynthesis. In terms of biological role, transfers and isomerizes the ribose moiety from AdoMet to the 7-aminomethyl group of 7-deazaguanine (preQ1-tRNA) to give epoxyqueuosine (oQ-tRNA). The protein is S-adenosylmethionine:tRNA ribosyltransferase-isomerase of Clostridium beijerinckii (strain ATCC 51743 / NCIMB 8052) (Clostridium acetobutylicum).